The following is a 455-amino-acid chain: Probable cytosolic iron-sulfur protein assembly protein 1 (455 aa).

7 WD repeats span residues 31-70 (GHSS…TTSA), 90-129 (GHQR…DGSS), 163-202 (GHES…EFEC), 208-247 (EHSQ…DWFC), 253-292 (GHES…QCEA), 318-365 (YHDR…DEKS), and 380-453 (HASA…YAAT).

The protein belongs to the WD repeat CIA1 family.

In terms of biological role, essential component of the cytosolic iron-sulfur (Fe/S) protein assembly machinery. Required for the maturation of extramitochondrial Fe/S proteins. In Mycosarcoma maydis (Corn smut fungus), this protein is Probable cytosolic iron-sulfur protein assembly protein 1.